Here is a 454-residue protein sequence, read N- to C-terminus: Diaminobutyrate--2-oxoglutarate aminotransferase (454 aa).

The residue at position 287 (K287) is an N6-(pyridoxal phosphate)lysine.

The protein belongs to the class-III pyridoxal-phosphate-dependent aminotransferase family. It depends on pyridoxal 5'-phosphate as a cofactor.

It carries out the reaction L-2,4-diaminobutanoate + 2-oxoglutarate = L-aspartate 4-semialdehyde + L-glutamate. Its pathway is amine and polyamine biosynthesis; 1,3-diaminopropane biosynthesis; 1,3-diaminopropane from L-aspartate 4-semialdehyde: step 1/2. This is Diaminobutyrate--2-oxoglutarate aminotransferase (dat) from Haemophilus influenzae (strain ATCC 51907 / DSM 11121 / KW20 / Rd).